We begin with the raw amino-acid sequence, 147 residues long: UPF0306 protein YPTB0506 (147 aa).

Belongs to the UPF0306 family.

The protein is UPF0306 protein YPTB0506 of Yersinia pseudotuberculosis serotype I (strain IP32953).